A 114-amino-acid chain; its full sequence is Large ribosomal subunit protein eL30 (114 aa).

This sequence belongs to the eukaryotic ribosomal protein eL30 family.

The polypeptide is Large ribosomal subunit protein eL30 (RPL30) (Branchiostoma belcheri (Amphioxus)).